The chain runs to 1775 residues: Stereocilin (1775 aa).

The signal sequence occupies residues 1–22; the sequence is MALSLWPLLLLLLLLLLLSFAV. Asn65, Asn202, Asn297, Asn366, Asn427, Asn476, Asn540, Asn565, Asn656, Asn824, Asn916, Asn964, Asn1179, and Asn1274 each carry an N-linked (GlcNAc...) asparagine glycan.

The protein belongs to the stereocilin family.

The protein resides in the cell surface. It is found in the cell projection. The protein localises to the kinocilium. Its subcellular location is the stereocilium. Functionally, essential to the formation of horizontal top connectors between outer hair cell stereocilia. This is Stereocilin (STRC) from Homo sapiens (Human).